Reading from the N-terminus, the 112-residue chain is UPF0060 membrane protein IL2332 (112 aa).

A run of 4 helical transmembrane segments spans residues 10–30 (LGLF…PYLW), 36–56 (SAWL…LLTL), 64–84 (VYAA…KAVE), and 90–110 (TYDA…AVGW).

This sequence belongs to the UPF0060 family.

Its subcellular location is the cell inner membrane. The sequence is that of UPF0060 membrane protein IL2332 from Idiomarina loihiensis (strain ATCC BAA-735 / DSM 15497 / L2-TR).